We begin with the raw amino-acid sequence, 111 residues long: HTH-type transcriptional regulator SinR (111 aa).

Residues 6-61 (IKQYRKEKGYSLSELAEKAGVAKSYLSSIERNLQTNPSIQFLEKVSAVLDVSVHTL) form the HTH cro/C1-type domain. Positions 17–36 (LSELAEKAGVAKSYLSSIER) form a DNA-binding region, H-T-H motif. A Sin domain is found at 65–103 (KHETEYDGQLDSEWEKLVRDAMTSGVSKKQFREFLDYQK).

In terms of assembly, homotetramer in the absence of SinI. Heterodimer with SinI. Interaction with SinI disrupts the SinR tetramer and its repressor activity. Interacts with hpr.

Its function is as follows. Negative as well as positive regulator of alternate developmental processes that are induced at the end of vegetative growth in response to nutrient depletion. Binds to the alkaline protease (aprE) gene at two sites. Also acts as a repressor of the key sporulation gene spo0A. Negatively regulates transcription of the eps operon, which is responsible for the biosynthesis of an exopolysaccharide involved in biofilm formation; therefore it could govern the transition between a state in which bacteria swim or swarm and a state in which bacteria assemble into multicellular communities. Acts with Hpr as a corepressor of epr expression. Also negatively regulates transcription of the lutABC operon, which is required for lactate utilization. Repressor activity is regulated by SinI. The sequence is that of HTH-type transcriptional regulator SinR (sinR) from Bacillus subtilis (strain 168).